The following is a 73-amino-acid chain: Conotoxin Lt9a (73 aa).

A signal peptide spans 1–23 (MTLTKSAVLILVLLLAFDNFADV). Positions 24–40 (QPGLITMGGGRLSNLLS) are excised as a propeptide. 3 disulfide bridges follow: Cys-48–Cys-62, Cys-53–Cys-64, and Cys-59–Cys-69.

Belongs to the conotoxin P superfamily. In terms of tissue distribution, expressed by the venom duct.

It is found in the secreted. Probable neurotoxin that inhibits ion channels. The polypeptide is Conotoxin Lt9a (Conus litteratus (Lettered cone)).